The primary structure comprises 348 residues: L-asparaginase 2 (348 aa).

Positions 1-22 are cleaved as a signal peptide; that stretch reads MEFFKKTALAALVMGFSGAALA. One can recognise an Asparaginase/glutaminase domain in the interval 24–348; it reads PNITILATGG…QQIQQIFNQY (325 aa). Thr34 acts as the O-isoaspartyl threonine intermediate in catalysis. Residues 80 to 81 and 111 to 112 each bind substrate; these read SQ and TD. A disulfide bridge connects residues Cys99 and Cys127.

It belongs to the asparaginase 1 family. Homotetramer.

The protein localises to the periplasm. The enzyme catalyses L-asparagine + H2O = L-aspartate + NH4(+). The sequence is that of L-asparaginase 2 (ansB) from Escherichia coli (strain K12).